Here is a 130-residue protein sequence, read N- to C-terminus: Small ribosomal subunit protein uS8 (130 aa).

This sequence belongs to the universal ribosomal protein uS8 family. Part of the 30S ribosomal subunit.

In terms of biological role, one of the primary rRNA binding proteins, it binds directly to 16S rRNA central domain where it helps coordinate assembly of the platform of the 30S subunit. This Pyrococcus horikoshii (strain ATCC 700860 / DSM 12428 / JCM 9974 / NBRC 100139 / OT-3) protein is Small ribosomal subunit protein uS8.